Reading from the N-terminus, the 251-residue chain is HTH-type transcriptional regulator UlaR (251 aa).

In terms of domain architecture, HTH deoR-type spans 3 to 58 (EAQRHQILLEMLAQLGFVTVEKVVERLGISPATARRDINKLDERGKLKKVRNGAEA). The H-T-H motif DNA-binding region spans 20 to 39 (VTVEKVVERLGISPATARRD).

It is found in the cytoplasm. In terms of biological role, represses ulaG and the ulaABCDEF operon. The protein is HTH-type transcriptional regulator UlaR of Shigella sonnei (strain Ss046).